We begin with the raw amino-acid sequence, 802 residues long: MKLSLDWMNDFTPLKEVGLDVILKKIAVSVCEIDGVVPFRPELDFVKIVRIESLDKHPSADKLQIAEVFDGSSKSQIVTGATNVKVGDLVPLAIPGAKLGDREILESELRGVKSSGMFCSEKELSLSEESSGVWILNGIEGAEIGKTIRSFLYYEDIIFEIDNKSITHRPDLWSHFGFARELASQLRLPITFNPFESLWNFDLSMKLPRVLENQNAHSYYASSICEVFVIPSKRKFQSRLQKCGIRVINNVVDVSNYVMLEMGQPTHFFDKRFLESQGGVSLEVSYAKKGESFALLDETSPSLEEEILLIRNQGRPVAVAGVMGGKESAVQNNTTEIVMESAVFAREKIRKSIRSTGIRSDSSVRYEKGLEATTTLPVIRRALNLLKENGCPSLKASEPVGFLHTPHKEVRIHTDIHFINTKLGITLSQGDITDILERLHFMVSWKGDRLEALVPKFRHNYDVTIPEDLVEEIGRTRGYDTIQVTPLLAEIKTPIRNLSRELERKCKTFFSVGLGYHEVYNYSFQALKENELDGDVELSVKIRNEMPEEQSVLRNSLISSLLKNIRTNQDRFSEIKIFEFGRAYFNIPEPDNEKKFFSFAVSFDRKSSESDLGLLEDDFLKVRKEIESFLKYIRIFEYFWDIKPEIFFHPGASLSLIVDSKQIGNLGYVHPAVLDSFELKKRVIYGSLEFEKLVEIWNTNRNISRFNVPSQFPEAEIDISILIGEKENTNLFTDLVRREKIPELQEGWVYSQFAGGSVPVGKRSVSYRFRLVNYEKTFTQERIKEISDHLVALAGKNGFVLR.

Positions 40 to 149 (RPELDFVKIV…EGAEIGKTIR (110 aa)) constitute a tRNA-binding domain. In terms of domain architecture, B5 spans 407–484 (HKEVRIHTDI…RTRGYDTIQV (78 aa)). The Mg(2+) site is built by D462, D468, E471, and E472. The FDX-ACB domain maps to 710–802 (SQFPEAEIDI…LAGKNGFVLR (93 aa)).

Belongs to the phenylalanyl-tRNA synthetase beta subunit family. Type 1 subfamily. As to quaternary structure, tetramer of two alpha and two beta subunits. Mg(2+) serves as cofactor.

It is found in the cytoplasm. The enzyme catalyses tRNA(Phe) + L-phenylalanine + ATP = L-phenylalanyl-tRNA(Phe) + AMP + diphosphate + H(+). In Leptospira borgpetersenii serovar Hardjo-bovis (strain L550), this protein is Phenylalanine--tRNA ligase beta subunit.